Here is a 217-residue protein sequence, read N- to C-terminus: Ras-related protein RABA1f (217 aa).

GTP is bound at residue 20 to 27; sequence GDSGVGKS. The Effector region signature appears at 42-50; that stretch reads SKSTIGVEF. GTP is bound by residues 68 to 72, 126 to 129, and 156 to 157; these read DTAGQ, NKAD, and SA. S-geranylgeranyl cysteine attachment occurs at residues Cys214 and Cys215.

This sequence belongs to the small GTPase superfamily. Rab family.

It localises to the cell membrane. Intracellular vesicle trafficking and protein transport. This chain is Ras-related protein RABA1f (RABA1F), found in Arabidopsis thaliana (Mouse-ear cress).